We begin with the raw amino-acid sequence, 368 residues long: Aspartate-semialdehyde dehydrogenase (368 aa).

NADP(+) contacts are provided by residues 10–13 (RGMV), 37–38 (TS), and glutamine 72. Position 101 (arginine 101) interacts with phosphate. Cysteine 134 functions as the Acyl-thioester intermediate in the catalytic mechanism. NADP(+)-binding positions include 160–161 (SG) and proline 191. Glutamate 239 contacts substrate. Phosphate is bound at residue lysine 242. Arginine 266 contributes to the substrate binding site. Catalysis depends on histidine 273, which acts as the Proton acceptor. Glutamine 349 serves as a coordination point for NADP(+).

Belongs to the aspartate-semialdehyde dehydrogenase family. In terms of assembly, homodimer.

The enzyme catalyses L-aspartate 4-semialdehyde + phosphate + NADP(+) = 4-phospho-L-aspartate + NADPH + H(+). The protein operates within amino-acid biosynthesis; L-lysine biosynthesis via DAP pathway; (S)-tetrahydrodipicolinate from L-aspartate: step 2/4. It participates in amino-acid biosynthesis; L-methionine biosynthesis via de novo pathway; L-homoserine from L-aspartate: step 2/3. It functions in the pathway amino-acid biosynthesis; L-threonine biosynthesis; L-threonine from L-aspartate: step 2/5. Its function is as follows. Catalyzes the NADPH-dependent formation of L-aspartate-semialdehyde (L-ASA) by the reductive dephosphorylation of L-aspartyl-4-phosphate. This chain is Aspartate-semialdehyde dehydrogenase, found in Azotobacter vinelandii.